Reading from the N-terminus, the 307-residue chain is MYEHIPVLLEESTSYLVTKPDGIYVDATFGLGGHSKKILEKLSSNGFLVAIDKDEEAIELGKEKFKKCNNIKIVHSPFSRLDEVLNFLKIDKIDGILFDLGVSSLQLDKPERGFSYNSDSFLDMRMDKTSKLTAYDVVNKYSEKELERIIREYGEERYAKKIAKEIVKRREQKPITTTKELNDLINSVVPRPKDGSNPAKRTFQAIRIEVNGELEEIKVALEKSIRFLKSGGRICVISFHSLEDRIVKEFFKYHSLECICPKDIPVCVCGKKKELNILTKKPITPTKEEIERNKRSHSAKLRVAEKI.

S-adenosyl-L-methionine-binding positions include 32–34 (GGH), aspartate 52, phenylalanine 78, aspartate 99, and glutamine 106.

The protein belongs to the methyltransferase superfamily. RsmH family.

It is found in the cytoplasm. The enzyme catalyses cytidine(1402) in 16S rRNA + S-adenosyl-L-methionine = N(4)-methylcytidine(1402) in 16S rRNA + S-adenosyl-L-homocysteine + H(+). In terms of biological role, specifically methylates the N4 position of cytidine in position 1402 (C1402) of 16S rRNA. This Caldicellulosiruptor saccharolyticus (strain ATCC 43494 / DSM 8903 / Tp8T 6331) protein is Ribosomal RNA small subunit methyltransferase H.